The chain runs to 352 residues: Potassium/proton antiporter CemA (352 aa).

Helical transmembrane passes span 52–72, 227–247, and 312–332; these read VLVSLQCLLTLIIIPLFIHFF, IAALTNLFADLLTLFSLIILF, and IILLFVATFPVLLDSVIKYWI.

It belongs to the CemA family.

It is found in the plastid. It localises to the chloroplast inner membrane. It catalyses the reaction K(+)(in) + H(+)(out) = K(+)(out) + H(+)(in). Its function is as follows. Contributes to K(+)/H(+) antiport activity by supporting proton efflux to control proton extrusion and homeostasis in chloroplasts in a light-dependent manner to modulate photosynthesis. Prevents excessive induction of non-photochemical quenching (NPQ) under continuous-light conditions. Indirectly promotes efficient inorganic carbon uptake into chloroplasts. The sequence is that of Potassium/proton antiporter CemA from Oltmannsiellopsis viridis (Marine flagellate).